A 222-amino-acid chain; its full sequence is Putative hemin import ATP-binding protein HrtA (222 aa).

One can recognise an ABC transporter domain in the interval 3–222; the sequence is LQVKDIKKSF…ELDDGVITNA (220 aa). 39 to 46 provides a ligand contact to ATP; that stretch reads GASGSGKT.

The protein belongs to the ABC transporter superfamily. HrtA family. The complex is composed of two ATP-binding proteins (HrtA), two transmembrane proteins (HrtB) and a solute-binding protein.

It localises to the cell membrane. Functionally, part of the ABC transporter complex hrt involved in hemin import. Responsible for energy coupling to the transport system. This chain is Putative hemin import ATP-binding protein HrtA (hrtA), found in Staphylococcus saprophyticus subsp. saprophyticus (strain ATCC 15305 / DSM 20229 / NCIMB 8711 / NCTC 7292 / S-41).